The primary structure comprises 117 residues: Ig heavy chain V region 23 (117 aa).

The first 19 residues, 1 to 19 (MGWSCIILFLVAAANGVHS), serve as a signal peptide directing secretion. A framework-1 region spans residues 20–49 (QVQLQQPGTELVKPGASVKLSCKASGYTFT). The cysteines at positions 41 and 115 are disulfide-linked. A complementarity-determining-1 region spans residues 50 to 54 (SYWMH). Residues 55–68 (WVKQRPGQGLEWIG) are framework-2. Positions 69-85 (NINPGNGGTNYNEKFKS) are complementarity-determining-2. The segment at 86–117 (KVTLTVDKSSSTAYTQLSSLTSEDSAVYYCAR) is framework-3.

The chain is Ig heavy chain V region 23 from Mus musculus (Mouse).